We begin with the raw amino-acid sequence, 1017 residues long: Semaphorin-6D (1017 aa).

The first 20 residues, 1 to 20 (MRVFLLCAYILLLMISQLRA), serve as a signal peptide directing secretion. The Extracellular portion of the chain corresponds to 21–606 (VSFPEDDEPL…GESNQMVHMN (586 aa)). A Sema domain is found at 27–512 (DEPLNTVDYH…FSSCVIRIPL (486 aa)). A glycan (N-linked (GlcNAc...) asparagine) is linked at asparagine 51. Intrachain disulfides connect cysteine 108-cysteine 118, cysteine 136-cysteine 145, cysteine 259-cysteine 370, and cysteine 284-cysteine 329. Residue asparagine 283 is glycosylated (N-linked (GlcNAc...) asparagine). Asparagine 435 and asparagine 461 each carry an N-linked (GlcNAc...) asparagine glycan. Intrachain disulfides connect cysteine 477-cysteine 506, cysteine 515-cysteine 533, cysteine 521-cysteine 568, and cysteine 525-cysteine 541. The PSI domain occupies 514 to 569 (RCERYGSCKKSCIASRDPYCGWLSQGSCGRVTPGMLAEGYEQDAEFGNTAHLGDCH). A helical membrane pass occupies residues 607–627 (VLITCVFAAFVLGAFIAGVAV). Topologically, residues 628–1017 (YCYRDMFVRK…SVRPLNKYTY (390 aa)) are cytoplasmic. 3 positions are modified to phosphoserine: serine 667, serine 678, and serine 688. Disordered regions lie at residues 688-719 (SRKELPPNGDTKSMVMDHRGQPPELAALPTPE), 731-769 (AMKSHSEKAHGHGASRKETPQFFPSSPPPHSPLSHGHIP), 783-818 (TSFSNSNAHKAEKKLQNIDHPLTKSSSKRDHRRSVD), and 873-912 (LYSPPSTLPRNSPTKRVDVPTTPGVPMTSLGRQRGYHKNS). A Phosphothreonine modification is found at threonine 717. Residues 734–749 (SHSEKAHGHGASRKET) show a composition bias toward basic and acidic residues. Phosphoserine occurs at positions 875, 901, and 927. A compositionally biased stretch (polar residues) spans 875-886 (SPPSTLPRNSPT). Polar residues predominate over residues 965–981 (LQPSLSRQSSYTSNGTL). A disordered region spans residues 965–1017 (LQPSLSRQSSYTSNGTLPRTGLKRTPSLKPDVPPKPSFVPQTPSVRPLNKYTY).

It belongs to the semaphorin family.

It is found in the cell membrane. In terms of biological role, shows growth cone collapsing activity on dorsal root ganglion (DRG) neurons in vitro. May be a stop signal for the DRG neurons in their target areas, and possibly also for other neurons. May also be involved in the maintenance and remodeling of neuronal connections. Ligand of TREM2 with PLXNA1 as coreceptor in dendritic cells, plays a role in the generation of immune responses and skeletal homeostasis. This is Semaphorin-6D (SEMA6D) from Pongo abelii (Sumatran orangutan).